The following is a 123-amino-acid chain: Small ribosomal subunit protein uS12 (123 aa).

Residue Asp-89 is modified to 3-methylthioaspartic acid.

This sequence belongs to the universal ribosomal protein uS12 family. Part of the 30S ribosomal subunit. Contacts proteins S8 and S17. May interact with IF1 in the 30S initiation complex.

Its function is as follows. With S4 and S5 plays an important role in translational accuracy. Interacts with and stabilizes bases of the 16S rRNA that are involved in tRNA selection in the A site and with the mRNA backbone. Located at the interface of the 30S and 50S subunits, it traverses the body of the 30S subunit contacting proteins on the other side and probably holding the rRNA structure together. The combined cluster of proteins S8, S12 and S17 appears to hold together the shoulder and platform of the 30S subunit. This is Small ribosomal subunit protein uS12 from Beijerinckia indica subsp. indica (strain ATCC 9039 / DSM 1715 / NCIMB 8712).